Consider the following 268-residue polypeptide: Ribosomal RNA small subunit methyltransferase A (268 aa).

S-adenosyl-L-methionine contacts are provided by Asn-18, Leu-20, Gly-45, Glu-66, Asp-91, and Asn-112.

It belongs to the class I-like SAM-binding methyltransferase superfamily. rRNA adenine N(6)-methyltransferase family. RsmA subfamily.

The protein resides in the cytoplasm. The catalysed reaction is adenosine(1518)/adenosine(1519) in 16S rRNA + 4 S-adenosyl-L-methionine = N(6)-dimethyladenosine(1518)/N(6)-dimethyladenosine(1519) in 16S rRNA + 4 S-adenosyl-L-homocysteine + 4 H(+). Its function is as follows. Specifically dimethylates two adjacent adenosines (A1518 and A1519) in the loop of a conserved hairpin near the 3'-end of 16S rRNA in the 30S particle. May play a critical role in biogenesis of 30S subunits. The sequence is that of Ribosomal RNA small subunit methyltransferase A from Shewanella oneidensis (strain ATCC 700550 / JCM 31522 / CIP 106686 / LMG 19005 / NCIMB 14063 / MR-1).